Reading from the N-terminus, the 190-residue chain is Probable oligoribonuclease (190 aa).

Residues 19-181 (MVWVDLEMTG…QDIEESIEEL (163 aa)) form the Exonuclease domain. Y140 is an active-site residue.

Belongs to the oligoribonuclease family.

Functionally, 3'-to-5' exoribonuclease specific for small oligoribonucleotides. This Dictyostelium discoideum (Social amoeba) protein is Probable oligoribonuclease (rexo2-1).